The sequence spans 297 residues: uncharacterized protein (297 aa).

The tract at residues 175 to 199 (VLPTNRNNPVRSNVDIKPVNPPSSK) is disordered. The span at 176-185 (LPTNRNNPVR) shows a compositional bias: polar residues. Asn-269 is a glycosylation site (N-linked (GlcNAc...) asparagine; by host). A helical membrane pass occupies residues 277-297 (LFGSPVLLICVASLLLLIIIL).

It belongs to the ascovirus HvAV ORF18 family.

The protein resides in the membrane. This is an uncharacterized protein from Noctuidae (owlet moths).